Reading from the N-terminus, the 302-residue chain is Methylsterol monooxygenase erg25A (302 aa).

Residue asparagine 5 is glycosylated (N-linked (GlcNAc...) asparagine). 3 helical membrane-spanning segments follow: residues 47-67 (NIVA…IYFS), 105-125 (YILL…HPMM), and 132-152 (FTIP…FFLL). The Fatty acid hydroxylase domain maps to 147-283 (IIFFLLEDTY…FRHWDVLMGT (137 aa)). Residues 161-165 (HRAMH) carry the Histidine box-1 motif. The short motif at 174–178 (HRIHH) is the Histidine box-2 element. A helical membrane pass occupies residues 193–213 (PWETLLLGLGTIGPPLLLALM). Residues 258 to 264 (WHDDHHR) carry the Histidine box-3 motif. Residue asparagine 269 is glycosylated (N-linked (GlcNAc...) asparagine).

Belongs to the sterol desaturase family. It depends on Fe cation as a cofactor.

The protein localises to the endoplasmic reticulum membrane. It participates in steroid metabolism; ergosterol biosynthesis. Functionally, sterol-C4-methyl oxidase; part of the third module of ergosterol biosynthesis pathway that includes the late steps of the pathway. Erg25A is a catalytic component of the C-4 demethylation complex that catalyzes the conversion of 4,4-dimethylfecosterol into fecosterol via 4-methylfecosterol. The third module or late pathway involves the ergosterol synthesis itself through consecutive reactions that mainly occur in the endoplasmic reticulum (ER) membrane. Firstly, the squalene synthase erg9 catalyzes the condensation of 2 farnesyl pyrophosphate moieties to form squalene, which is the precursor of all steroids. Squalene synthase is crucial for balancing the incorporation of farnesyl diphosphate (FPP) into sterol and nonsterol isoprene synthesis. Secondly, squalene is converted into lanosterol by the consecutive action of the squalene epoxidase erg1 and the lanosterol synthase erg7. Then, the delta(24)-sterol C-methyltransferase erg6 methylates lanosterol at C-24 to produce eburicol. Eburicol is the substrate of the sterol 14-alpha demethylase encoded by cyp51A and cyp51B, to yield 4,4,24-trimethyl ergosta-8,14,24(28)-trienol. The C-14 reductase erg24 then reduces the C14=C15 double bond which leads to 4,4-dimethylfecosterol. A sequence of further demethylations at C-4, involving the C-4 demethylation complex containing the C-4 methylsterol oxidases erg25A or erg25B, the sterol-4-alpha-carboxylate 3-dehydrogenase erg26 and the 3-keto-steroid reductase erg27, leads to the production of fecosterol via 4-methylfecosterol. The C-8 sterol isomerase erg2 then catalyzes the reaction which results in unsaturation at C-7 in the B ring of sterols and thus converts fecosterol to episterol. The sterol-C5-desaturase erg3B then catalyzes the introduction of a C-5 double bond in the B ring to produce 5-dehydroepisterol. The 2 other sterol-C5-desaturases, erg3A and erg3C, seem to be less important in ergosterol biosynthesis. The C-22 sterol desaturase erg5 further converts 5-dehydroepisterol into ergosta-5,7,22,24(28)-tetraen-3beta-ol by forming the C-22(23) double bond in the sterol side chain. Finally, ergosta-5,7,22,24(28)-tetraen-3beta-ol is substrate of the C-24(28) sterol reductases erg4A and erg4B to produce ergosterol. Possible alternative sterol biosynthetic pathways might exist from fecosterol to ergosterol, depending on the activities of the erg3 isoforms. The sequence is that of Methylsterol monooxygenase erg25A from Aspergillus fumigatus (strain ATCC MYA-4609 / CBS 101355 / FGSC A1100 / Af293) (Neosartorya fumigata).